A 212-amino-acid polypeptide reads, in one-letter code: Ribosomal RNA small subunit methyltransferase G (212 aa).

S-adenosyl-L-methionine contacts are provided by residues Gly-80, Leu-85, 131 to 132, and Arg-146; that span reads AE.

It belongs to the methyltransferase superfamily. RNA methyltransferase RsmG family.

It localises to the cytoplasm. The enzyme catalyses guanosine(527) in 16S rRNA + S-adenosyl-L-methionine = N(7)-methylguanosine(527) in 16S rRNA + S-adenosyl-L-homocysteine. Its function is as follows. Specifically methylates the N7 position of guanine in position 527 of 16S rRNA. The sequence is that of Ribosomal RNA small subunit methyltransferase G from Xanthomonas campestris pv. campestris (strain B100).